A 398-amino-acid chain; its full sequence is Steroid C26-monooxygenase (398 aa).

Residue Cys-340 participates in heme binding.

This sequence belongs to the cytochrome P450 family. Requires heme as cofactor.

The catalysed reaction is cholest-4-en-3-one + 6 reduced [2Fe-2S]-[ferredoxin] + 3 O2 + 5 H(+) = (25R)-3-oxocholest-4-en-26-oate + 6 oxidized [2Fe-2S]-[ferredoxin] + 4 H2O. It catalyses the reaction cholest-4-en-3-one + 2 reduced [2Fe-2S]-[ferredoxin] + O2 + 2 H(+) = (25R)-3-oxocholest-4-en-26-ol + 2 oxidized [2Fe-2S]-[ferredoxin] + H2O. The enzyme catalyses (25R)-3-oxocholest-4-en-26-ol + 2 reduced [2Fe-2S]-[ferredoxin] + O2 + 2 H(+) = (25R)-3-oxocholest-4-en-26-al + 2 oxidized [2Fe-2S]-[ferredoxin] + 2 H2O. It carries out the reaction (25R)-3-oxocholest-4-en-26-al + 2 reduced [2Fe-2S]-[ferredoxin] + O2 + H(+) = (25R)-3-oxocholest-4-en-26-oate + 2 oxidized [2Fe-2S]-[ferredoxin] + H2O. The catalysed reaction is cholesterol + NADPH + O2 + H(+) = 26-hydroxycholesterol + NADP(+) + H2O. It catalyses the reaction 26-hydroxycholesterol + 2 reduced [2Fe-2S]-[ferredoxin] + O2 + 2 H(+) = (3beta)-hydroxy-cholest-5-en-26-al + 2 oxidized [2Fe-2S]-[ferredoxin] + 2 H2O. The enzyme catalyses (3beta)-hydroxy-cholest-5-en-26-al + NADPH + O2 = (3beta)-hydroxy-cholest-5-en-26-oate + NADP(+) + H2O. It carries out the reaction (25S)-3-oxocholest-4-en-26-ol + 2 reduced [2Fe-2S]-[ferredoxin] + O2 + 2 H(+) = (25S)-3-oxocholest-4-en-26-al + 2 oxidized [2Fe-2S]-[ferredoxin] + 2 H2O. The catalysed reaction is (25S)-3-oxocholest-4-en-26-al + 2 reduced [2Fe-2S]-[ferredoxin] + O2 + H(+) = (25S)-3-oxocholest-4-en-26-oate + 2 oxidized [2Fe-2S]-[ferredoxin] + H2O. It functions in the pathway steroid metabolism; cholesterol degradation. With respect to regulation, inhibited by econazole, clotrimazole and miconazole. Functionally, involved in the utilization of cholesterol as the sole carbon and energy source by degrading the side chain during infection. Primarily catalyzes the sequential oxidation of the terminal methyl of cholest-4-en-3-one into (25R)-26-hydroxycholest-4-en-3-one (alcohol), (25R)-26-oxocholest-4-en-3-one (aldehyde), to finally yield the carboxylic acid (25R)-3-oxocholest-4-en-26-oate. In vitro, Cyp142 catalyzes with equal preference the oxidation of both (25R)- and (25S)-26-hydroxycholest-4-en-3-one diastereomers to the corresponding carboxylic acid which is a prerequisite for entry into the beta-oxidation pathway. Also able to sequentially oxidize cholesterol itself, not only cholest-4-en-3-one. In Mycobacterium tuberculosis (strain ATCC 25618 / H37Rv), this protein is Steroid C26-monooxygenase (cyp142).